The sequence spans 655 residues: Interferon-induced GTP-binding protein Mx2 (655 aa).

Residues 1-18 (MVLSTEENTGVDSVNLPS) show a composition bias toward polar residues. Residues 1–28 (MVLSTEENTGVDSVNLPSGETGLGEKDQ) form a disordered region. The Dynamin-type G domain occupies 60 to 333 (DLALPAIAVI…LISHICKSLP (274 aa)). Residues 70-77 (GDQSSGKS) are G1 motif. Residue 70–77 (GDQSSGKS) coordinates GTP. Residues 95 to 97 (VTR) form a G2 motif region. A G3 motif region spans residues 171-174 (DLPG). Residues 171–175 (DLPGI) and 240–243 (TKPD) contribute to the GTP site. Residues 240–243 (TKPD) form a G4 motif region. Residues 272–275 (KCRG) form a G5 motif region. Positions 542–562 (EAEEEKKTKHGTSSSSQSQDL) are disordered. Positions 552–562 (GTSSSSQSQDL) are enriched in low complexity. The GED domain maps to 567 to 655 (MAEIFQHLNA…ARRRLAKFPG (89 aa)).

This sequence belongs to the TRAFAC class dynamin-like GTPase superfamily. Dynamin/Fzo/YdjA family.

The protein localises to the cytoplasm. Its function is as follows. Interferon-induced dynamin-like GTPase with antiviral activity against vesicular stomatitis virus (VSV) and Hantaan virus (HNTV). The polypeptide is Interferon-induced GTP-binding protein Mx2 (Mx2) (Mus musculus (Mouse)).